Reading from the N-terminus, the 498-residue chain is ATP synthase subunit beta, chloroplastic (498 aa).

At Thr6 the chain carries Phosphothreonine. A Phosphoserine modification is found at Ser13. 172 to 179 contacts ATP; it reads GGAGVGKT.

Belongs to the ATPase alpha/beta chains family. In terms of assembly, F-type ATPases have 2 components, CF(1) - the catalytic core - and CF(0) - the membrane proton channel. CF(1) has five subunits: alpha(3), beta(3), gamma(1), delta(1), epsilon(1). CF(0) has four main subunits: a(1), b(1), b'(1) and c(9-12).

The protein localises to the plastid. Its subcellular location is the chloroplast thylakoid membrane. It carries out the reaction ATP + H2O + 4 H(+)(in) = ADP + phosphate + 5 H(+)(out). Functionally, produces ATP from ADP in the presence of a proton gradient across the membrane. The catalytic sites are hosted primarily by the beta subunits. This chain is ATP synthase subunit beta, chloroplastic, found in Raphanus sativus (Radish).